Here is an 89-residue protein sequence, read N- to C-terminus: Probable Fe(2+)-trafficking protein (89 aa).

Belongs to the Fe(2+)-trafficking protein family.

In terms of biological role, could be a mediator in iron transactions between iron acquisition and iron-requiring processes, such as synthesis and/or repair of Fe-S clusters in biosynthetic enzymes. This chain is Probable Fe(2+)-trafficking protein, found in Legionella pneumophila (strain Lens).